Reading from the N-terminus, the 94-residue chain is Co-chaperonin GroES (94 aa).

Belongs to the GroES chaperonin family. Heptamer of 7 subunits arranged in a ring. Interacts with the chaperonin GroEL.

The protein localises to the cytoplasm. Together with the chaperonin GroEL, plays an essential role in assisting protein folding. The GroEL-GroES system forms a nano-cage that allows encapsulation of the non-native substrate proteins and provides a physical environment optimized to promote and accelerate protein folding. GroES binds to the apical surface of the GroEL ring, thereby capping the opening of the GroEL channel. This is Co-chaperonin GroES from Bacillus subtilis (strain 168).